A 217-amino-acid polypeptide reads, in one-letter code: Homologous-pairing protein 2 homolog (217 aa).

Positions 89–117 (LDASIMALTAKVQGLQQSCRHMEAELKEL) are interaction with NR3C1, homodimerization and transcriptional activation almost abolished when missing. Positions 93 to 153 (IMALTAKVQG…LKNIKAATNH (61 aa)) form a coiled coil. The segment at 118 to 182 (TSALTTPEMQ…WRKRKRMTTE (65 aa)) is DNA-binding. The segment at 118–182 (TSALTTPEMQ…WRKRKRMTTE (65 aa)) is interaction with NR3C1 decreased when missing.

This sequence belongs to the HOP2 family. Forms a stable heterodimer with MND1. Interacts with PSMC3/TBP1. Interacts with the DNA-binding domain of the nuclear receptors NR3C1/GR, ESR2/ER-beta, THRB and RXRA. Phosphorylated by PKA, PKC and MAPK.

The protein localises to the nucleus. Functionally, plays an important role in meiotic recombination. Stimulates DMC1-mediated strand exchange required for pairing homologous chromosomes during meiosis. The complex PSMC3IP/MND1 binds DNA, stimulates the recombinase activity of DMC1 as well as DMC1 D-loop formation from double-strand DNA. This complex stabilizes presynaptic RAD51 and DMC1 filaments formed on single strand DNA to capture double-strand DNA. This complex stimulates both synaptic and presynaptic critical steps in RAD51 and DMC1-promoted homologous pairing. May inhibit HIV-1 viral protein TAT activity and modulate the activity of proteasomes through association with PSMC3. Plays a role as a coactivator in nuclear receptor-mediated transcription. The sequence is that of Homologous-pairing protein 2 homolog (Psmc3ip) from Rattus norvegicus (Rat).